The primary structure comprises 426 residues: MNELDLNQYMDRVGRQARAASRAMARASTADKNRALLTIAAAIRRDADKLKAVNARDVERARANGQDAAFIDRLTLSDKAIATMAAGLGQIAALADPIGEISNMKFRPTGIQVGQMRVPLGVIGIIYESRPNVTIDAAALCLKSGNATILRGGSEAIESNTALAALVAEGLSAAGLPSEAVQVIETTDRAAVGRLITMTEYVDVIVPRGGKSLIARLMEEARVPMIKHLDGICHVYIDADADLDKAVRVCDNAKTQRYAPCNTMETLLVSQDIAAAALPPLCRIYQEKGVELRVCPATRATLEAAGFTGLVDAAEEDWRLEYLAPILAIKTVAGLDDAIAHINEYGSHHTDSIITENYSAGMRFIREVDSASVMINASTRFADGFEYGLGAEIGISNDKLHARGPVGLEGLTSLKYVVFGHGEIRT.

This sequence belongs to the gamma-glutamyl phosphate reductase family.

It localises to the cytoplasm. The enzyme catalyses L-glutamate 5-semialdehyde + phosphate + NADP(+) = L-glutamyl 5-phosphate + NADPH + H(+). It functions in the pathway amino-acid biosynthesis; L-proline biosynthesis; L-glutamate 5-semialdehyde from L-glutamate: step 2/2. Catalyzes the NADPH-dependent reduction of L-glutamate 5-phosphate into L-glutamate 5-semialdehyde and phosphate. The product spontaneously undergoes cyclization to form 1-pyrroline-5-carboxylate. The polypeptide is Gamma-glutamyl phosphate reductase (Cupriavidus necator (strain ATCC 17699 / DSM 428 / KCTC 22496 / NCIMB 10442 / H16 / Stanier 337) (Ralstonia eutropha)).